The sequence spans 455 residues: 5'-nucleotidase domain-containing protein 1 (455 aa).

Asp16 serves as the catalytic Nucleophile. Mg(2+) contacts are provided by Asp16 and Asp18. The active-site Proton donor is Asp18. At Lys171 the chain carries N6-acetyllysine. Asp313 contributes to the Mg(2+) binding site. Positions 339 to 364 (GDEGTRSQRPEESEPLEKKGKYEGPK) are enriched in basic and acidic residues. The interval 339–368 (GDEGTRSQRPEESEPLEKKGKYEGPKAKPL) is disordered.

Belongs to the 5'(3')-deoxyribonucleotidase family.

This is 5'-nucleotidase domain-containing protein 1 (NT5DC1) from Homo sapiens (Human).